The chain runs to 199 residues: uncharacterized protein (199 aa).

An N-terminal signal peptide occupies residues 1–23 (MKPGCTLFFLLCSALTVTTEAHA).

This is an uncharacterized protein from Escherichia coli (strain K12).